Consider the following 100-residue polypeptide: Cell division protein DrpB (100 aa).

Topologically, residues 1 to 16 are cytoplasmic; the sequence is MEYGSTKMEERLSRSP. The helical transmembrane segment at 17 to 37 threads the bilayer; the sequence is GGKLALWAFYTWCGYFVWAMA. At 38–64 the chain is on the periplasmic side; that stretch reads RYIWVMSRIPDAPVSGFESDLGSTAGK. Residues 65–85 form a helical membrane-spanning segment; that stretch reads WLGALVGFLFMALVGALLGSI. The Cytoplasmic segment spans residues 86–100; it reads AWYTRPRPARSRRYE.

The protein belongs to the DrpB family. As to quaternary structure, bacterial adenylate cyclase hybrid (BACTH) studies show interaction of this protein with DamX, FtsI, FtsN, FtsQ, YmgF, DedD, FtsA and MalF, as well as weaker interactions with DedD, MalG and PBP2, but this assay often generates false positive results.

It localises to the cell inner membrane. In terms of biological role, a non-essential division protein that localizes to the septal ring in low ionic strength medium. Localizes to the septal ring in about 30% of observed cells before cell constriction occurs; localization occurs in low ionic strength medium (0 NaCl) and requires FtsZ but not FtsEX. Overexpression partially restores correct FtsI localization to the division septum in an ftsEX deletion. Isolated as a multicopy suppressor of an ftsEX deletion mutant; it does not suppress other cell division defects (e.g. ftsA, ftsI, ftsQ or ftsZ). This is Cell division protein DrpB from Escherichia coli (strain K12).